Consider the following 422-residue polypeptide: Glutamyl-tRNA reductase (422 aa).

Substrate-binding positions include 49-52 (TCNR), Ser-108, 113-115 (EPQ), and Gln-119. Residue Cys-50 is the Nucleophile of the active site. 188 to 193 (GAGQTI) contributes to the NADP(+) binding site.

It belongs to the glutamyl-tRNA reductase family. In terms of assembly, homodimer.

The catalysed reaction is (S)-4-amino-5-oxopentanoate + tRNA(Glu) + NADP(+) = L-glutamyl-tRNA(Glu) + NADPH + H(+). It participates in porphyrin-containing compound metabolism; protoporphyrin-IX biosynthesis; 5-aminolevulinate from L-glutamyl-tRNA(Glu): step 1/2. In terms of biological role, catalyzes the NADPH-dependent reduction of glutamyl-tRNA(Glu) to glutamate 1-semialdehyde (GSA). The polypeptide is Glutamyl-tRNA reductase (Marinomonas sp. (strain MWYL1)).